The following is a 489-amino-acid chain: MTNSIQFIDGCWEAGEGQLFKSIDPARNEVIWSGEAASETQVEKAILAARAAFPDWSGRSVEERLAICQKFSELLEENKEHLARTMAKETGKPVWETRTEVGAMMGKVAISERAYHERTGTVENDMPGAKAFIRHKPHGVVAVYGPYNFPGHLPNGHIVPALIAGNTVVFKPSELTPMVAQETVKLWEKAGIPAGVLNLVQGEVDTGKALSAHPQIDGLYFTGSSNTGHLLHKQFGGRPDKILALEMGGNNPLLVTNVADVDAAVHNIVQSAFITSGQRCTCARRLFIEDSEQGRAVLERLIEVTENILVDDYEADPQPFMGAMISAKAAGEMVDAQNELLHKGAKSLVRMKQTDSKKGFVTPGIVDVTGVEDLPDEEHFGPLLKVYRFKDIDAAIKEANNTRYGLSAGVLCDDEQTYRYFFKHIRAGIVNWNKPITGASSAAPFGGIGASGNHRASAYYAADYCAYPVASVEADSMSLPESLAPGLKF.

Position 223-228 (223-228) interacts with NAD(+); that stretch reads GSSNTG. Residues Glu246 and Cys280 contribute to the active site.

This sequence belongs to the aldehyde dehydrogenase family. AstD subfamily.

It carries out the reaction N-succinyl-L-glutamate 5-semialdehyde + NAD(+) + H2O = N-succinyl-L-glutamate + NADH + 2 H(+). It functions in the pathway amino-acid degradation; L-arginine degradation via AST pathway; L-glutamate and succinate from L-arginine: step 4/5. Functionally, catalyzes the NAD-dependent reduction of succinylglutamate semialdehyde into succinylglutamate. This Idiomarina loihiensis (strain ATCC BAA-735 / DSM 15497 / L2-TR) protein is N-succinylglutamate 5-semialdehyde dehydrogenase.